The primary structure comprises 248 residues: Proteasome subunit alpha (248 aa).

It belongs to the peptidase T1A family. In terms of assembly, the 20S proteasome core is composed of 14 alpha and 14 beta subunits that assemble into four stacked heptameric rings, resulting in a barrel-shaped structure. The two inner rings, each composed of seven catalytic beta subunits, are sandwiched by two outer rings, each composed of seven alpha subunits. The catalytic chamber with the active sites is on the inside of the barrel. Has a gated structure, the ends of the cylinder being occluded by the N-termini of the alpha-subunits. Is capped by the proteasome-associated ATPase, ARC.

It localises to the cytoplasm. The protein operates within protein degradation; proteasomal Pup-dependent pathway. With respect to regulation, the formation of the proteasomal ATPase ARC-20S proteasome complex, likely via the docking of the C-termini of ARC into the intersubunit pockets in the alpha-rings, may trigger opening of the gate for substrate entry. Interconversion between the open-gate and close-gate conformations leads to a dynamic regulation of the 20S proteasome proteolysis activity. In terms of biological role, component of the proteasome core, a large protease complex with broad specificity involved in protein degradation. This Mycobacterium tuberculosis (strain ATCC 25177 / H37Ra) protein is Proteasome subunit alpha.